The chain runs to 147 residues: Ubiquitin-conjugating enzyme E2 D4 (147 aa).

One can recognise a UBC core domain in the interval 1–147; the sequence is MALKRIQKEL…AREWTQKYAM (147 aa). The active-site Glycyl thioester intermediate is C85.

It belongs to the ubiquitin-conjugating enzyme family.

It catalyses the reaction S-ubiquitinyl-[E1 ubiquitin-activating enzyme]-L-cysteine + [E2 ubiquitin-conjugating enzyme]-L-cysteine = [E1 ubiquitin-activating enzyme]-L-cysteine + S-ubiquitinyl-[E2 ubiquitin-conjugating enzyme]-L-cysteine.. It participates in protein modification; protein ubiquitination. Its function is as follows. Accepts ubiquitin from the E1 complex and catalyzes its covalent attachment to other proteins. In vitro able to promote polyubiquitination using all 7 ubiquitin Lys residues, but may prefer 'Lys-11' and 'Lys-48'-linked polyubiquitination. The protein is Ubiquitin-conjugating enzyme E2 D4 (UBE2D4) of Homo sapiens (Human).